A 243-amino-acid polypeptide reads, in one-letter code: DNA repair protein RecO (243 aa).

The protein belongs to the RecO family.

Involved in DNA repair and RecF pathway recombination. The protein is DNA repair protein RecO of Vibrio parahaemolyticus serotype O3:K6 (strain RIMD 2210633).